The following is a 245-amino-acid chain: Superoxide dismutase [Mn], mitochondrial (245 aa).

Residues 1–32 constitute a mitochondrion transit peptide; that stretch reads MVNLGSIWQNLLASQAPLQSMTGNATTMAGLA. Residues His-58, His-106, Asp-196, and His-200 each contribute to the Mn(2+) site.

It belongs to the iron/manganese superoxide dismutase family. Homotetramer. Mn(2+) is required as a cofactor.

It is found in the mitochondrion matrix. The catalysed reaction is 2 superoxide + 2 H(+) = H2O2 + O2. Destroys superoxide anion radicals which are normally produced within the cells and which are toxic to biological systems. The chain is Superoxide dismutase [Mn], mitochondrial (sod-2) from Neurospora crassa (strain ATCC 24698 / 74-OR23-1A / CBS 708.71 / DSM 1257 / FGSC 987).